A 551-amino-acid polypeptide reads, in one-letter code: Arginine--tRNA ligase (551 aa).

The 'HIGH' region motif lies at 123 to 133; it reads ANPTGPLTIGR.

The protein belongs to the class-I aminoacyl-tRNA synthetase family. As to quaternary structure, monomer.

The protein resides in the cytoplasm. It catalyses the reaction tRNA(Arg) + L-arginine + ATP = L-arginyl-tRNA(Arg) + AMP + diphosphate. The polypeptide is Arginine--tRNA ligase (Chlorobium phaeobacteroides (strain DSM 266 / SMG 266 / 2430)).